Consider the following 163-residue polypeptide: Small ribosomal subunit protein bS18c (163 aa).

Disordered regions lie at residues 1 to 52 (MYIS…IGPG) and 144 to 163 (NLRN…SSDC). The span at 7–48 (PFRKSKQPFRKSKQPFHKSKQPFRKFKQPFRKSKQPFRRRSR) shows a compositional bias: basic residues.

The protein belongs to the bacterial ribosomal protein bS18 family. As to quaternary structure, part of the 30S ribosomal subunit.

It is found in the plastid. The protein resides in the chloroplast. This is Small ribosomal subunit protein bS18c from Saccharum hybrid (Sugarcane).